The primary structure comprises 48 residues: Small ribosomal subunit protein uS14 (48 aa).

Zn(2+) contacts are provided by Cys13, Cys16, Cys31, and Cys34.

The protein belongs to the universal ribosomal protein uS14 family. Zinc-binding uS14 subfamily. As to quaternary structure, part of the 30S ribosomal subunit. The cofactor is Zn(2+).

Functionally, binds 16S rRNA, required for the assembly of 30S particles. The chain is Small ribosomal subunit protein uS14 from Methanopyrus kandleri (strain AV19 / DSM 6324 / JCM 9639 / NBRC 100938).